We begin with the raw amino-acid sequence, 146 residues long: Cyanate hydratase (146 aa).

Active-site residues include Arg87, Glu90, and Ser113.

It belongs to the cyanase family.

It carries out the reaction cyanate + hydrogencarbonate + 3 H(+) = NH4(+) + 2 CO2. Functionally, catalyzes the reaction of cyanate with bicarbonate to produce ammonia and carbon dioxide. In Teredinibacter turnerae (strain ATCC 39867 / T7901), this protein is Cyanate hydratase.